Here is a 239-residue protein sequence, read N- to C-terminus: Carboxy-S-adenosyl-L-methionine synthase (239 aa).

Residues Y35, 64–66 (GCS), 88–89 (DN), and R195 contribute to the S-adenosyl-L-methionine site.

Belongs to the class I-like SAM-binding methyltransferase superfamily. Cx-SAM synthase family. Homodimer.

It carries out the reaction prephenate + S-adenosyl-L-methionine = carboxy-S-adenosyl-L-methionine + 3-phenylpyruvate + H2O. Functionally, catalyzes the conversion of S-adenosyl-L-methionine (SAM) to carboxy-S-adenosyl-L-methionine (Cx-SAM). This is Carboxy-S-adenosyl-L-methionine synthase from Helicobacter pylori (strain G27).